The sequence spans 257 residues: Spermidine/putrescine transport system permease protein PotC (257 aa).

The Cytoplasmic portion of the chain corresponds to 1 to 7 (MSRFFLR). Residues 8-27 (NAFMFVVYAYLYIPIIILVT) form a helical membrane-spanning segment. Residues 28–65 (NSFNKDRYGLSWKGFSWNWYERLFNNDTLIQAAIHSVT) are Periplasmic-facing. One can recognise an ABC transmembrane type-1 domain in the interval 60–248 (AIHSVTIAFF…VLSLALVVLS (189 aa)). Residues 66–85 (IAFFAATLATIVGGLTAIAL) traverse the membrane as a helical segment. The Cytoplasmic portion of the chain corresponds to 86 to 100 (YRYRFRGKQAVSGML). A helical membrane pass occupies residues 101–120 (FIVMMSPDIVMAVSLLALFM). Residues 121-128 (VVGISLGF) are Periplasmic-facing. Residues 129 to 148 (WSLLLAHVTFCLPYVTVTIF) traverse the membrane as a helical segment. The Cytoplasmic portion of the chain corresponds to 149-176 (SRLNGFDSRMLEAAKDLGASEVTILRKI). Residues 177–196 (ILPLALPAVVSGWLLSFTIS) form a helical membrane-spanning segment. The Periplasmic segment spans residues 197–231 (LDDVVVSSFVSGVSYEILPLRIFSLVKTGVTPEVN). A helical membrane pass occupies residues 232–251 (ALATIMIVLSLALVVLSQLI). At 252 to 257 (TRKNNH) the chain is on the cytoplasmic side.

Belongs to the binding-protein-dependent transport system permease family. CysTW subfamily.

It is found in the cell inner membrane. In terms of biological role, required for the activity of the bacterial periplasmic transport system of putrescine and spermidine. This is Spermidine/putrescine transport system permease protein PotC (potC) from Haemophilus influenzae (strain ATCC 51907 / DSM 11121 / KW20 / Rd).